A 109-amino-acid polypeptide reads, in one-letter code: Insulin (109 aa).

The signal sequence occupies residues 1–24 (MAPWMHLLTVLALLALWGPNSVQA). Intrachain disulfides connect C31–C93, C43–C106, and C92–C97. Positions 56–84 (ELEDLQVEQAELGLEAGGLQPSALEMILQ) are cleaved as a propeptide — c peptide.

Belongs to the insulin family. As to quaternary structure, heterodimer of a B chain and an A chain linked by two disulfide bonds.

It localises to the secreted. Its function is as follows. Insulin decreases blood glucose concentration. It increases cell permeability to monosaccharides, amino acids and fatty acids. It accelerates glycolysis, the pentose phosphate cycle, and glycogen synthesis in liver. In Octodon degus (Degu), this protein is Insulin (INS).